The sequence spans 431 residues: Adenylosuccinate synthetase (431 aa).

GTP is bound by residues 13–19 (GDEGKGK) and 41–43 (GHT). The active-site Proton acceptor is aspartate 14. Mg(2+) contacts are provided by aspartate 14 and glycine 41. IMP is bound by residues 14 to 17 (DEGK), 39 to 42 (NAGH), threonine 130, arginine 144, glutamine 225, threonine 240, and arginine 304. Histidine 42 serves as the catalytic Proton donor. Substrate is bound at residue 300–306 (AVTGRPR). GTP contacts are provided by residues arginine 306, 332–334 (KLD), and 415–417 (STG).

Belongs to the adenylosuccinate synthetase family. As to quaternary structure, homodimer. Mg(2+) is required as a cofactor.

Its subcellular location is the cytoplasm. It carries out the reaction IMP + L-aspartate + GTP = N(6)-(1,2-dicarboxyethyl)-AMP + GDP + phosphate + 2 H(+). Its pathway is purine metabolism; AMP biosynthesis via de novo pathway; AMP from IMP: step 1/2. Functionally, plays an important role in the de novo pathway of purine nucleotide biosynthesis. Catalyzes the first committed step in the biosynthesis of AMP from IMP. The sequence is that of Adenylosuccinate synthetase from Legionella pneumophila (strain Paris).